The sequence spans 841 residues: DNA mismatch repair protein MutS (841 aa).

596–603 is an ATP binding site; that stretch reads GPNMSGKS.

Belongs to the DNA mismatch repair MutS family.

This protein is involved in the repair of mismatches in DNA. It is possible that it carries out the mismatch recognition step. This protein has a weak ATPase activity. The sequence is that of DNA mismatch repair protein MutS from Acholeplasma laidlawii (strain PG-8A).